A 666-amino-acid polypeptide reads, in one-letter code: MSDSHLTAFDKASKAGFIIALGIVYGDIGTSPLYTMQSLVENQGGVNQVSESFILGSISLIIWTLTLITTIKYVLIALKADNHHEGGIFSLFTLVRKMSPWLIIPAMIGGATLLSDGALTPAVTVTSAIEGLKAVPGLSHIYQNQTNVIITTLVILIVLFGIQRFGTGFIGKIFGPVMFIWFSFLGVSGFFNTLGHLEIFKAINPYYALHLLFSPENHRGIFILGSIFLATTGAEALYSDLGHVGRGNIYVSWPFVKMCIVLSYCGQAAWILANKHSGIELNPFFASVPSQLTVYVVILATLAAIIASQALISGSFTLVSEAMRLKIFPLFRVTYPGANLGQLYIPVINWILFAVTSCTVLYFRTSAHMEAAYGLAITITMLMTTILLNYYLIKEGVKPFLAHLVMTFFALVEFIFFWASAVKFMHGGYVVVILALAIVFVMFIWHAGTRIVFKYVKSLNLNDYKEQIKQLRDDVCFDLYQTNVVYLSNRMQDYMIDRSILYSILDKRPKRARVYWFVNVQVTDEPYTAKYKVDMMGTDYMVRVNLYLGFRMPQTVPRYLRTIVQDLMESGRLPKQEQEYTITPGRDVGDFRFVLIEERVSNARQLSNFERFIMQTKASIKHVTASPMRWFGLQYSEVTLEVVPLILSDVLKLPIKELVPVEDSEA.

The next 12 helical transmembrane spans lie at 16-36, 58-78, 100-120, 141-161, 165-185, 221-241, 253-273, 292-312, 343-363, 373-393, 399-419, and 424-444; these read GFIIALGIVYGDIGTSPLYTM, ISLIIWTLTLITTIKYVLIAL, PWLIIPAMIGGATLLSDGALT, IYQNQTNVIITTLVILIVLFG, FGTGFIGKIFGPVMFIWFSFL, IFILGSIFLATTGAEALYSDL, WPFVKMCIVLSYCGQAAWILA, LTVYVVILATLAAIIASQALI, LYIPVINWILFAVTSCTVLYF, YGLAITITMLMTTILLNYYLI, PFLAHLVMTFFALVEFIFFWA, and FMHGGYVVVILALAIVFVMFI.

This sequence belongs to the HAK/KUP transporter (TC 2.A.72) family.

The protein localises to the cell membrane. The enzyme catalyses K(+)(in) + H(+)(in) = K(+)(out) + H(+)(out). Transport of potassium into the cell. Likely operates as a K(+):H(+) symporter. The protein is Probable potassium transport system protein Kup of Streptococcus pyogenes serotype M5 (strain Manfredo).